The primary structure comprises 224 residues: LexA repressor (224 aa).

The H-T-H motif DNA-binding region spans 31-51 (RAEIAAELGFKSANAAEEHLQ). Residues Ser142 and Lys179 each act as for autocatalytic cleavage activity in the active site.

Belongs to the peptidase S24 family. Homodimer.

The enzyme catalyses Hydrolysis of Ala-|-Gly bond in repressor LexA.. Functionally, represses a number of genes involved in the response to DNA damage (SOS response), including recA and lexA. In the presence of single-stranded DNA, RecA interacts with LexA causing an autocatalytic cleavage which disrupts the DNA-binding part of LexA, leading to derepression of the SOS regulon and eventually DNA repair. The chain is LexA repressor from Acidovorax ebreus (strain TPSY) (Diaphorobacter sp. (strain TPSY)).